A 215-amino-acid chain; its full sequence is Adenylate kinase (215 aa).

10 to 15 (GAGKGT) lines the ATP pocket. Positions 30-59 (STGDILRANVREGTELGLAAKAYMDKGELV) are NMP. AMP is bound by residues threonine 31, arginine 36, 57–59 (ELV), 85–88 (GYPR), and glutamine 92. The segment at 126–162 (GRLMCKCGASYHIISNPPKKDNVCDICGGEVFQRADD) is LID. Arginine 127 is a binding site for ATP. 2 residues coordinate Zn(2+): cysteine 130 and cysteine 132. 135–136 (SY) serves as a coordination point for ATP. Residues cysteine 149 and cysteine 152 each coordinate Zn(2+). AMP-binding residues include arginine 159 and arginine 170. Lysine 198 contacts ATP.

The protein belongs to the adenylate kinase family. As to quaternary structure, monomer.

It localises to the cytoplasm. The enzyme catalyses AMP + ATP = 2 ADP. Its pathway is purine metabolism; AMP biosynthesis via salvage pathway; AMP from ADP: step 1/1. Catalyzes the reversible transfer of the terminal phosphate group between ATP and AMP. Plays an important role in cellular energy homeostasis and in adenine nucleotide metabolism. This chain is Adenylate kinase, found in Methanosarcina acetivorans (strain ATCC 35395 / DSM 2834 / JCM 12185 / C2A).